We begin with the raw amino-acid sequence, 281 residues long: Proteasome subunit beta (281 aa).

Positions 1–53 are cleaved as a propeptide — removed in mature form; by autocatalysis; sequence MEANTRSTGRLPAAFLTPGSSSFMDFLGEHQPEMLPGNRQLPPVQGVIEAPHG. Catalysis depends on T54, which acts as the Nucleophile.

It belongs to the peptidase T1B family. In terms of assembly, the 20S proteasome core is composed of 14 alpha and 14 beta subunits that assemble into four stacked heptameric rings, resulting in a barrel-shaped structure. The two inner rings, each composed of seven catalytic beta subunits, are sandwiched by two outer rings, each composed of seven alpha subunits. The catalytic chamber with the active sites is on the inside of the barrel. Has probably a gated structure, the ends of the cylinder being occluded by the N-termini of the alpha-subunits. Is likely capped by the proteasome-associated ATPase, ARC.

It localises to the cytoplasm. The enzyme catalyses Cleavage of peptide bonds with very broad specificity.. It participates in protein degradation; proteasomal Pup-dependent pathway. Its activity is regulated as follows. The formation of the proteasomal ATPase ARC-20S proteasome complex, likely via the docking of the C-termini of ARC into the intersubunit pockets in the alpha-rings, may trigger opening of the gate for substrate entry. Interconversion between the open-gate and close-gate conformations leads to a dynamic regulation of the 20S proteasome proteolysis activity. Peptidolytic activity is completely inhibited by lactacystin, and to a lesser extent, by N-acetyl-Leu-Leu-norleucinal (Ac-LLnL) and benzoyloxycarbonyl-Leu-Leu-Leu-vinylsulfone (Z-LLL-VS) in vitro. Functionally, component of the proteasome core, a large protease complex with broad specificity involved in protein degradation. The S.coelicolor proteasome is able to cleave oligopeptides after hydrophobic residues, but not after basic or acidic residues, thus displaying chymotrypsin-like activity but not trypsin-like activity. This is Proteasome subunit beta from Streptomyces coelicolor (strain ATCC BAA-471 / A3(2) / M145).